A 177-amino-acid chain; its full sequence is Peptide methionine sulfoxide reductase MsrA 2 (177 aa).

Cys12 is a catalytic residue.

It belongs to the MsrA Met sulfoxide reductase family.

The catalysed reaction is L-methionyl-[protein] + [thioredoxin]-disulfide + H2O = L-methionyl-(S)-S-oxide-[protein] + [thioredoxin]-dithiol. The enzyme catalyses [thioredoxin]-disulfide + L-methionine + H2O = L-methionine (S)-S-oxide + [thioredoxin]-dithiol. Has an important function as a repair enzyme for proteins that have been inactivated by oxidation. Catalyzes the reversible oxidation-reduction of methionine sulfoxide in proteins to methionine. This Staphylococcus aureus (strain NCTC 8325 / PS 47) protein is Peptide methionine sulfoxide reductase MsrA 2 (msrA2).